A 393-amino-acid chain; its full sequence is Formate-dependent phosphoribosylglycinamide formyltransferase (393 aa).

N(1)-(5-phospho-beta-D-ribosyl)glycinamide contacts are provided by residues 22–23 (EL) and Glu-82. ATP contacts are provided by residues Arg-114, Lys-155, 160–165 (SSGKGQ), 195–198 (EGLV), and Glu-203. The 190-residue stretch at 119–308 (RLAAETLQLP…EFALHVRAFL (190 aa)) folds into the ATP-grasp domain. Residues Glu-267 and Glu-279 each coordinate Mg(2+). Residues Asp-286, Lys-355, and 362 to 363 (RR) each bind N(1)-(5-phospho-beta-D-ribosyl)glycinamide.

It belongs to the PurK/PurT family. As to quaternary structure, homodimer.

The catalysed reaction is N(1)-(5-phospho-beta-D-ribosyl)glycinamide + formate + ATP = N(2)-formyl-N(1)-(5-phospho-beta-D-ribosyl)glycinamide + ADP + phosphate + H(+). The protein operates within purine metabolism; IMP biosynthesis via de novo pathway; N(2)-formyl-N(1)-(5-phospho-D-ribosyl)glycinamide from N(1)-(5-phospho-D-ribosyl)glycinamide (formate route): step 1/1. Involved in the de novo purine biosynthesis. Catalyzes the transfer of formate to 5-phospho-ribosyl-glycinamide (GAR), producing 5-phospho-ribosyl-N-formylglycinamide (FGAR). Formate is provided by PurU via hydrolysis of 10-formyl-tetrahydrofolate. In Yersinia pseudotuberculosis serotype O:3 (strain YPIII), this protein is Formate-dependent phosphoribosylglycinamide formyltransferase.